The chain runs to 467 residues: Serine/threonine-protein phosphatase 2A 56 kDa regulatory subunit epsilon isoform (467 aa).

The disordered stretch occupies residues 1–39; the sequence is MSSAPTTPPSVDKVDGFSRKSVRKARQKRSQSSSQFRSQ. Position 2 is an N-acetylserine (serine 2). Threonine 7 carries the post-translational modification Phosphothreonine. Basic residues predominate over residues 20–29; the sequence is KSVRKARQKR. Phosphoserine occurs at positions 30, 32, and 34. Over residues 30-39 the composition is skewed to low complexity; the sequence is SQSSSQFRSQ.

Belongs to the phosphatase 2A regulatory subunit B56 family. In terms of assembly, PP2A consists of a common heterodimeric core enzyme, composed of a 36 kDa catalytic subunit (subunit C) and a 65 kDa constant regulatory subunit (PR65 or subunit A), that associates with a variety of regulatory subunits. Proteins that associate with the core dimer include three families of regulatory subunits B (the R2/B/PR55/B55, R3/B''/PR72/PR130/PR59 and R5/B'/B56 families), the 48 kDa variable regulatory subunit, viral proteins, and cell signaling molecules. Interacts with SGO1. Found in a complex with at least ARL2, PPP2CB; PPP2R1A, PPP2R2A, PPP2R5E and TBCD.

The protein resides in the cytoplasm. The B regulatory subunit might modulate substrate selectivity and catalytic activity, and might also direct the localization of the catalytic enzyme to a particular subcellular compartment. Interacts with cyclin G in vitro. The sequence is that of Serine/threonine-protein phosphatase 2A 56 kDa regulatory subunit epsilon isoform (Ppp2r5e) from Mus musculus (Mouse).